The primary structure comprises 882 residues: Bifunctional heparan sulfate N-deacetylase/N-sulfotransferase 1 (882 aa).

Residues Met-1–Gln-17 lie on the Cytoplasmic side of the membrane. The interval Met-1–Phe-169 is sufficient for localization to Golgi membrane. Residues Ala-18–Tyr-39 form a helical; Signal-anchor for type II membrane protein membrane-spanning segment. A heparan sulfate N-deacetylase 1 region spans residues Gly-40–Glu-598. Topologically, residues Gly-40 to Arg-882 are lumenal. Asn-231, Asn-351, and Asn-401 each carry an N-linked (GlcNAc...) asparagine glycan. Residues Lys-599–Arg-882 form a heparan sulfate N-sulfotransferase 1 region. The active-site For sulfotransferase activity is Lys-614. Adenosine 3',5'-bisphosphate is bound at residue Lys-614–Thr-618. N-linked (GlcNAc...) asparagine glycosylation occurs at Asn-667. The adenosine 3',5'-bisphosphate site is built by Ser-712 and Trp-817. A disulfide bridge links Cys-818 with Cys-828. Lys-833 to Tyr-837 contributes to the adenosine 3',5'-bisphosphate binding site.

It belongs to the sulfotransferase 1 family. NDST subfamily. As to quaternary structure, monomer. Interacts with heparan sulfate co-polymerase subunits EXT1 and EXT2. Interacts with NDST1 isoform 3. In terms of assembly, interacts with heparan sulfate co-polymerase subunits EXT1 and EXT2. Interacts with NDST1 isoform 1. Widely expressed. Expression is most abundant in heart, liver and pancreas.

Its subcellular location is the golgi apparatus. It localises to the trans-Golgi network membrane. It is found in the cis-Golgi network membrane. The catalysed reaction is N-acetyl-alpha-D-glucosaminyl-[heparan sulfate](n) + H2O = alpha-D-glucosaminyl-[heparan sulfate](n) + acetate. The enzyme catalyses alpha-D-glucosaminyl-[heparan sulfate](n) + 3'-phosphoadenylyl sulfate = N-sulfo-alpha-D-glucosaminyl-[heparan sulfate](n) + adenosine 3',5'-bisphosphate + 2 H(+). The protein operates within glycan metabolism; heparan sulfate biosynthesis. It participates in glycan metabolism; heparin biosynthesis. In terms of biological role, essential bifunctional enzyme that catalyzes both the N-deacetylation and the N-sulfation of glucosamine (GlcNAc) of the glycosaminoglycan in heparan sulfate. Modifies the GlcNAc-GlcA disaccharide repeating sugar backbone to make N-sulfated heparosan, a prerequisite substrate for later modifications in heparin biosynthesis. Plays a role in determining the extent and pattern of sulfation of heparan sulfate. Participates in biosynthesis of heparan sulfate that can ultimately serve as L-selectin ligands, thereby playing a role in inflammatory response. Required for the exosomal release of SDCBP, CD63 and syndecan. Functionally, lacks both N-deacetylase and N-sulfotransferase activities. Acts as a dominant negative on isoform 1, likely by changing the composition of enzyme complexes responsible for elongation and modification of heparan sulfates. This chain is Bifunctional heparan sulfate N-deacetylase/N-sulfotransferase 1, found in Homo sapiens (Human).